Here is a 124-residue protein sequence, read N- to C-terminus: Small ribosomal subunit protein bS6m (124 aa).

It belongs to the bacterial ribosomal protein bS6 family. Component of the mitochondrial ribosome small subunit (28S) which comprises a 12S rRNA and about 30 distinct proteins.

It localises to the mitochondrion. The chain is Small ribosomal subunit protein bS6m (MRPS6) from Bos taurus (Bovine).